Here is an 856-residue protein sequence, read N- to C-terminus: Nuclear valosin-containing protein-like (856 aa).

The tract at residues Met1–Lys220 is interaction with RPL5. Positions Arg49–Arg52 match the Nucleolar localization signal motif. Lys70 is modified (N6-acetyllysine). Residues Ala84 to Ile175 form a disordered region. Positions Lys85–Arg88 match the Nuclear localization signal motif. Residues Glu92–Pro111 are compositionally biased toward acidic residues. Polar residues-rich tracts occupy residues Gln114–Leu124 and Asp133–Gly158. Phosphoserine is present on Ser134. Position 138 is a phosphothreonine (Thr138). The residue at position 156 (Lys156) is an N6-acetyllysine. Residue Ser191 is modified to Phosphoserine. Residues Pro197 to Gln236 form a disordered region. Basic and acidic residues predominate over residues Gln205–Lys218. A Glycyl lysine isopeptide (Lys-Gly) (interchain with G-Cter in SUMO2) cross-link involves residue Lys208. Ser211 and Ser215 each carry phosphoserine. The short motif at Lys218 to Lys232 is the Nuclear localization signal element. The span at Arg219–Arg230 shows a compositional bias: basic residues. The interval Val267 to Leu474 is interaction with WDR74. ATP is bound at residue Gly305 to Thr312. Positions Gln496–Glu523 are disordered. Gly622 to Thr629 contributes to the ATP binding site.

This sequence belongs to the AAA ATPase family. In terms of assembly, interacts with NCL/nucleolin. Isoform 1 and isoform 2 interact with TERT and isoform 1 exhibits a higher binding affinity for TERT compared to isoform 2. Isoform 1 interacts with MTREX in an ATP-dependent manner; the interaction is required to associate NVL with nuclear RNA exosome. Isoform 1 interacts with RPL5 in an ATP-dependent manner. Interacts with WDR74 (through WDR repeats); the interaction is independent of RNA or pre-60S ribosome particles. In terms of tissue distribution, widely expressed. Highest level of expression in heart, placenta, skeletal muscle, pancreas and retina.

The protein resides in the nucleus. It is found in the nucleoplasm. It localises to the nucleolus. Participates in the assembly of the telomerase holoenzyme and effecting of telomerase activity via its interaction with TERT. Involved in both early and late stages of the pre-rRNA processing pathways. Spatiotemporally regulates 60S ribosomal subunit biogenesis in the nucleolus. Catalyzes the release of specific assembly factors, such as WDR74, from pre-60S ribosomal particles through the ATPase activity. In Homo sapiens (Human), this protein is Nuclear valosin-containing protein-like.